Here is a 443-residue protein sequence, read N- to C-terminus: ATP-dependent protease ATPase subunit HslU (443 aa).

ATP-binding positions include Ile18 and Gly60 to Glu65. The segment at Ala139–Ser158 is disordered. The ATP site is built by Asp256, Glu321, and Arg393.

It belongs to the ClpX chaperone family. HslU subfamily. In terms of assembly, a double ring-shaped homohexamer of HslV is capped on each side by a ring-shaped HslU homohexamer. The assembly of the HslU/HslV complex is dependent on binding of ATP.

The protein localises to the cytoplasm. ATPase subunit of a proteasome-like degradation complex; this subunit has chaperone activity. The binding of ATP and its subsequent hydrolysis by HslU are essential for unfolding of protein substrates subsequently hydrolyzed by HslV. HslU recognizes the N-terminal part of its protein substrates and unfolds these before they are guided to HslV for hydrolysis. The chain is ATP-dependent protease ATPase subunit HslU from Erwinia tasmaniensis (strain DSM 17950 / CFBP 7177 / CIP 109463 / NCPPB 4357 / Et1/99).